A 453-amino-acid polypeptide reads, in one-letter code: Gamma-aminobutyric acid receptor subunit alpha-6 (453 aa).

A signal peptide spans 1-19 (MASSLPWLCIILWLENALG). At 20–243 (KLEVEGNFYS…FHLQRKMGYF (224 aa)) the chain is on the extracellular side. N-linked (GlcNAc...) asparagine glycosylation is present at N31. Residue R84 participates in 4-aminobutanoate binding. N-linked (GlcNAc...) asparagine glycosylation is found at N128 and N141. Position 147 (T147) interacts with 4-aminobutanoate. C156 and C170 are disulfide-bonded. A helical transmembrane segment spans residues 244–264 (MIQIYTPCIMTVILSQVSFWI). Residues 265-270 (NKESVP) lie on the Cytoplasmic side of the membrane. A helical membrane pass occupies residues 271-290 (ARTVFGITTVLTMTTLSISA). Residues 291–304 (RHSLPKVSYATAMD) are Extracellular-facing. A helical membrane pass occupies residues 305 to 325 (WFIAVCFAFVFSALIEFAAVN). Residues 326–422 (YFTNLQTQKA…GTSKIDQYSR (97 aa)) lie on the Cytoplasmic side of the membrane. Residue T403 is modified to Phosphothreonine. A helical transmembrane segment spans residues 423–443 (ILFPVAFAGFNLVYWVVYLSK). Residues 444-453 (DTMEVSSSVE) are Extracellular-facing.

Belongs to the ligand-gated ion channel (TC 1.A.9) family. Gamma-aminobutyric acid receptor (TC 1.A.9.5) subfamily. GABRA6 sub-subfamily. In terms of assembly, heteropentamer, formed by a combination of alpha (GABRA1-6), beta (GABRB1-3), gamma (GABRG1-3), delta (GABRD), epsilon (GABRE), rho (GABRR1-3), pi (GABRP) and theta (GABRQ) chains, each subunit exhibiting distinct physiological and pharmacological properties. Binds UBQLN1. In terms of tissue distribution, expressed in brain, in cerebellar granule cells.

The protein resides in the postsynaptic cell membrane. It is found in the cell membrane. It carries out the reaction chloride(in) = chloride(out). Alpha subunit of the heteropentameric ligand-gated chloride channel gated by gamma-aminobutyric acid (GABA), a major inhibitory neurotransmitter in the brain. GABA-gated chloride channels, also named GABA(A) receptors (GABAAR), consist of five subunits arranged around a central pore and contain GABA active binding site(s) located at the alpha and beta subunit interface(s). When activated by GABA, GABAARs selectively allow the flow of chloride anions across the cell membrane down their electrochemical gradient. Alpha-6/GABRA6 subunits are found at both synaptic and extrasynaptic sites. Chloride influx into the postsynaptic neuron following GABAAR opening decreases the neuron ability to generate a new action potential, thereby reducing nerve transmission. Extrasynaptic alpha-6-containing receptors contribute to the tonic GABAergic inhibition. Alpha-6 subunits are also present on glutamatergic synapses. The protein is Gamma-aminobutyric acid receptor subunit alpha-6 of Homo sapiens (Human).